Consider the following 322-residue polypeptide: Transaldolase (322 aa).

Lys136 acts as the Schiff-base intermediate with substrate in catalysis.

It belongs to the transaldolase family. Type 1 subfamily. In terms of assembly, homodimer.

Its subcellular location is the cytoplasm. The catalysed reaction is D-sedoheptulose 7-phosphate + D-glyceraldehyde 3-phosphate = D-erythrose 4-phosphate + beta-D-fructose 6-phosphate. It participates in carbohydrate degradation; pentose phosphate pathway; D-glyceraldehyde 3-phosphate and beta-D-fructose 6-phosphate from D-ribose 5-phosphate and D-xylulose 5-phosphate (non-oxidative stage): step 2/3. Transaldolase is important for the balance of metabolites in the pentose-phosphate pathway. The sequence is that of Transaldolase from Xanthomonas oryzae pv. oryzae (strain KACC10331 / KXO85).